The following is a 397-amino-acid chain: Phosphonopyruvate decarboxylase (397 aa).

Belongs to the TPP enzyme family. Thiamine diphosphate serves as cofactor. The cofactor is Mg(2+).

It carries out the reaction 3-phosphonopyruvate + H(+) = phosphonoacetaldehyde + CO2. It participates in secondary metabolite biosynthesis; bialaphos biosynthesis. Its function is as follows. Involved in the biosynthesis of phosphinothricin tripeptide (PTT), also known as bialaphos (BA), a natural-product antibiotic and potent herbicide. Catalyzes the decarboxylation of phosphonopyruvate (PnPy) to generate phosphonoacetaldehyde (PnAA). This Streptomyces viridochromogenes (strain DSM 40736 / JCM 4977 / BCRC 1201 / Tue 494) protein is Phosphonopyruvate decarboxylase.